The chain runs to 874 residues: DNA mismatch repair protein MutS (874 aa).

613–620 is a binding site for ATP; that stretch reads GPNMGGKS. The disordered stretch occupies residues 799–820; that stretch reads EAGSTPSPAPVSVNEPKPAAPT.

The protein belongs to the DNA mismatch repair MutS family.

Its function is as follows. This protein is involved in the repair of mismatches in DNA. It is possible that it carries out the mismatch recognition step. This protein has a weak ATPase activity. This is DNA mismatch repair protein MutS from Marinobacter nauticus (strain ATCC 700491 / DSM 11845 / VT8) (Marinobacter aquaeolei).